A 428-amino-acid polypeptide reads, in one-letter code: CinA-like protein (428 aa).

Belongs to the CinA family.

In Gemmatimonas aurantiaca (strain DSM 14586 / JCM 11422 / NBRC 100505 / T-27), this protein is CinA-like protein.